A 335-amino-acid polypeptide reads, in one-letter code: Pyridoxal 5'-phosphate synthase subunit PdxS (335 aa).

Asp30 is a D-ribose 5-phosphate binding site. Catalysis depends on Lys87, which acts as the Schiff-base intermediate with D-ribose 5-phosphate. Gly159 is a binding site for D-ribose 5-phosphate. Arg171 provides a ligand contact to D-glyceraldehyde 3-phosphate. Residues Gly257 and 278 to 279 (GS) each bind D-ribose 5-phosphate.

This sequence belongs to the PdxS/SNZ family. In the presence of PdxT, forms a dodecamer of heterodimers.

The catalysed reaction is aldehydo-D-ribose 5-phosphate + D-glyceraldehyde 3-phosphate + L-glutamine = pyridoxal 5'-phosphate + L-glutamate + phosphate + 3 H2O + H(+). Its pathway is cofactor biosynthesis; pyridoxal 5'-phosphate biosynthesis. Its function is as follows. Catalyzes the formation of pyridoxal 5'-phosphate from ribose 5-phosphate (RBP), glyceraldehyde 3-phosphate (G3P) and ammonia. The ammonia is provided by the PdxT subunit. Can also use ribulose 5-phosphate and dihydroxyacetone phosphate as substrates, resulting from enzyme-catalyzed isomerization of RBP and G3P, respectively. This chain is Pyridoxal 5'-phosphate synthase subunit PdxS, found in Thermococcus gammatolerans (strain DSM 15229 / JCM 11827 / EJ3).